A 601-amino-acid polypeptide reads, in one-letter code: Coronin-like protein crn1 (601 aa).

5 WD repeats span residues 79-119 (GHTA…TVME), 132-172 (GHSR…AHVS), 174-213 (KMDV…PVSV), 220-260 (AKNP…EPIG), and 266-306 (DTGS…FHYL). Disordered stretches follow at residues 361-386 (SDIY…KDAQ) and 407-540 (SATV…VEEK). Basic and acidic residues-rich tracts occupy residues 419–429 (KHNEEKVETPK), 437–453 (KPKE…EPEV), and 462–495 (KVEE…EKSF). Ser-500 and Ser-501 each carry phosphoserine. Residues 507 to 526 (EDVKKEPSEEKKLEVSDEAP) show a composition bias toward basic and acidic residues. Phosphoserine is present on Ser-553. The stretch at 556-600 (NLADLNKRFEGFEKRYEEELAIRDWKIAQLEDKLAKLTEAIKEKC) forms a coiled coil.

Belongs to the WD repeat coronin family. In terms of assembly, binds to F-actin.

This is Coronin-like protein crn1 (crn1) from Schizosaccharomyces pombe (strain 972 / ATCC 24843) (Fission yeast).